Reading from the N-terminus, the 504-residue chain is Dimethylsulfoniopropionate lyase 5 (504 aa).

Belongs to the aspartate/glutamate racemases family. ALMA1 subfamily. In terms of assembly, homotetramer.

It carries out the reaction S,S-dimethyl-beta-propiothetin = acrylate + dimethyl sulfide + H(+). Its function is as follows. Mediates cleavage of dimethylsulfoniopropionate (DMSP) into dimethyl sulfide (DMS) and acrylate. DMS is the principal form by which sulfur is transported from oceans to the atmosphere and is a key component of the ocean sulfur cycle. The sequence is that of Dimethylsulfoniopropionate lyase 5 from Emiliania huxleyi (strain CCMP1516).